Here is a 468-residue protein sequence, read N- to C-terminus: Cytochrome P450-like protein L532 (468 aa).

2 consecutive transmembrane segments (helical) span residues 22-42 (WFAYLLRILDWIIQFLSFGLI) and 172-192 (VTVLSLIGLVGFCKVIFGVDV). Cysteine 415 contributes to the heme binding site.

This sequence belongs to the cytochrome P450 family. Heme serves as cofactor.

It localises to the host membrane. It is found in the virion. This chain is Cytochrome P450-like protein L532, found in Acanthamoeba polyphaga mimivirus (APMV).